The sequence spans 154 residues: Putative pre-16S rRNA nuclease (154 aa).

The protein belongs to the YqgF nuclease family.

The protein localises to the cytoplasm. Its function is as follows. Could be a nuclease involved in processing of the 5'-end of pre-16S rRNA. In Rickettsia africae (strain ESF-5), this protein is Putative pre-16S rRNA nuclease.